Consider the following 391-residue polypeptide: Cytochrome P450 165A3 (391 aa).

The interval 1–22 is disordered; it reads MFEEKNALRGTEIHRRERFDPG. Position 342 (Cys342) interacts with heme.

The protein belongs to the cytochrome P450 family. It depends on heme as a cofactor.

Its pathway is antibiotic biosynthesis; vancomycin biosynthesis. Its function is as follows. Involved in the coupling of aromatic side chains of the heptapeptide of vancomycin. In Amycolatopsis orientalis (Nocardia orientalis), this protein is Cytochrome P450 165A3 (cyp165A3).